A 521-amino-acid chain; its full sequence is Medium/long-chain-fatty-acid--[acyl-carrier-protein] ligase MbtM (521 aa).

Belongs to the ATP-dependent AMP-binding enzyme family.

The enzyme catalyses a long-chain fatty acid + holo-[ACP] + ATP = a long-chain fatty acyl-[ACP] + AMP + diphosphate. The catalysed reaction is a medium-chain fatty acid + holo-[ACP] + ATP = a medium-chain fatty acyl-[ACP] + AMP + diphosphate. It participates in siderophore biosynthesis; mycobactin biosynthesis. Functionally, activates lipidic moieties required for mycobactin biosynthesis. Converts medium- to long-chain aliphatic fatty acids into acyl adenylate, which is further transferred on to the phosphopantetheine arm of the carrier protein MbtL. This is Medium/long-chain-fatty-acid--[acyl-carrier-protein] ligase MbtM (mbtM) from Mycobacterium sp. (strain MCS).